Consider the following 429-residue polypeptide: C4-dicarboxylate transport protein (429 aa).

8 helical membrane-spanning segments follow: residues 9 to 29 (VLYV…HFYP), 45 to 65 (LIKM…IAGM), 79 to 99 (LLYF…ATHI), 149 to 169 (GEIL…AHLG), 185 to 205 (VLFG…FGAM), 223 to 243 (LIGT…GTIA), 308 to 328 (IYMT…LTWM), and 356 to 376 (AATL…ILGI).

It belongs to the dicarboxylate/amino acid:cation symporter (DAACS) (TC 2.A.23) family.

The protein localises to the cell inner membrane. Its function is as follows. Responsible for the transport of dicarboxylates such as succinate, fumarate, and malate from the periplasm across the membrane. In Burkholderia ambifaria (strain ATCC BAA-244 / DSM 16087 / CCUG 44356 / LMG 19182 / AMMD) (Burkholderia cepacia (strain AMMD)), this protein is C4-dicarboxylate transport protein.